A 287-amino-acid polypeptide reads, in one-letter code: Inorganic pyrophosphatase (287 aa).

R79 serves as a coordination point for diphosphate. Mg(2+)-binding residues include D116, D121, and D153.

This sequence belongs to the PPase family. Requires Mg(2+) as cofactor.

The protein resides in the cytoplasm. The catalysed reaction is diphosphate + H2O = 2 phosphate + H(+). The protein is Inorganic pyrophosphatase (IPP1) of Zygosaccharomyces bailii.